A 398-amino-acid chain; its full sequence is Inner membrane protein YjgN (398 aa).

Over 1 to 24 (MAQVINEMDVPSHSFVFHGTGERY) the chain is Cytoplasmic. The helical transmembrane segment at 25 to 45 (FLICVVNVLLTIITLGIYLPW) threads the bilayer. Residues 46–73 (ALMKCKRYLYANMEVNGQRFSYGITGGN) are Periplasmic-facing. A helical transmembrane segment spans residues 74-94 (VFVSCLFFVFFYFAILMTVSA). A topological domain (cytoplasmic) is located at residue aspartate 95. A helical transmembrane segment spans residues 96 to 116 (MPLVGCVLTLLLLVLLIFMAA). Over 117 to 142 (KGLRHQALMTSLNGVRFSFNCSMKGF) the chain is Periplasmic. Residues 143-163 (WWVTFFLPILMAIGMGTVFFI) traverse the membrane as a helical segment. At 164–175 (STKMLPANSSSS) the chain is on the cytoplasmic side. The helical transmembrane segment at 176 to 196 (VIISMVLMAIVGIVSIGIFNG) threads the bilayer. The Periplasmic portion of the chain corresponds to 197-228 (TLYSLVMSFLWSNTSFGIHRFKVKLDTTYCIK). Residues 229 to 249 (YAILAFLALLPFLAVAGYIIF) traverse the membrane as a helical segment. Residues 250 to 278 (DQILNAYDSSVYANDDIENLQQFMEMQRK) are Cytoplasmic-facing. A helical transmembrane segment spans residues 279–299 (MIIAQLIYYFGIAVSTSYLTV). Residues 300–333 (SLRNHFMSNLSLNDGRIRFRLTLTYHGMLYRMCA) are Periplasmic-facing. Residues 334–354 (LVVISGITGGLAYPLLKIWMI) form a helical membrane-spanning segment. Residues 355–398 (DWQAKNTYLLGDLDDLPLINKEEQPDKGFLASISRGVMPSLPFL) lie on the Cytoplasmic side of the membrane.

The protein resides in the cell inner membrane. This Escherichia coli (strain K12) protein is Inner membrane protein YjgN (yjgN).